Reading from the N-terminus, the 243-residue chain is HTH-type transcriptional repressor NagR (243 aa).

In terms of domain architecture, HTH gntR-type spans 9–77 (IPIYYQIMEQ…KGRGTFVSKP (69 aa)). Positions 37 to 56 (EREYAEQFGISRMTVRQALS) form a DNA-binding region, H-T-H motif. Residues 89–90 (FT), 133–135 (RVR), E145, 165–167 (SIY), E222, and Y228 each bind alpha-D-glucosamine 6-phosphate. N-acetyl-D-glucosamine 6-phosphate contacts are provided by residues 89–90 (FT), 133–135 (RVR), E145, 165–167 (SIY), E222, and Y228.

As to quaternary structure, homodimer. Forms dimers via the C-terminal effector-binding domain. At high concentrations, probably forms polymers along the DNA.

With respect to regulation, binding to DNA is allosterically inhibited by an effector molecule. Binding of the effector to the C-terminal domain leads to a conformational change that modulates binding to DNA and thereby regulates transcription of the target genes. Glucosamine-6-phosphate (GlcN6P) and/or N-acetylglucosamine-6-phosphate (GlcNAc6P) are putative effectors of NagR. Binding of GlcNAc6P may prevent the protein-protein interactions responsible for polymerization along the DNA, but not the specific DNA binding. Functionally, main transcriptional repressor of genes involved in N-acetylglucosamine (GlcNAc) transport and utilization. Represses the expression of the nagAB and nagP operons by binding directly within their upstream regions. Binds to the DNA consensus sequence 5'-ATTGGTATAGACAACT-3'. Also acts as a weak repressor of mapB expression. In Bacillus subtilis (strain 168), this protein is HTH-type transcriptional repressor NagR.